A 2266-amino-acid polypeptide reads, in one-letter code: Protein ELYS (2266 aa).

The interval 1-494 (MRDLRAQVTS…SGVVHLTCTG (494 aa)) is seven-bladed beta propeller repeats. Residues 1–981 (MRDLRAQVTS…QTLKINVMND (981 aa)) are necessary for cytoplasmic localization. Phosphoserine occurs at positions 509, 528, 1080, 1138, 1142, 1150, 1153, 1155, and 1160. Positions 591–1092 (VVLTKEEFDR…IEEPSPIVYS (502 aa)) are important for nuclear localization. Residues 1019 to 2266 (YHLSTSSVFR…PKQILRRKML (1248 aa)) are disordered. The segment at 1149-2266 (RSLPSSSQLK…PKQILRRKML (1118 aa)) is necessary for nuclear localization. Position 1175 is a phosphothreonine (threonine 1175). Phosphoserine is present on residues serine 1214, serine 1218, serine 1222, serine 1232, and serine 1250. Threonine 1257 bears the Phosphothreonine mark. Residues serine 1283 and serine 1297 each carry the phosphoserine modification. Polar residues-rich tracts occupy residues 1305-1320 (KGNS…TTLE) and 1335-1353 (FTAS…NVTE). Residue threonine 1369 is modified to Phosphothreonine. Serine 1371 and serine 1513 each carry phosphoserine. Positions 1446–1698 (RANDNKSMAD…MEQSIHETIP (253 aa)) are mediates transcriptional activity. Threonine 1517 carries the phosphothreonine modification. Phosphoserine occurs at positions 1533, 1541, 1729, and 1806. 2 stretches are compositionally biased toward polar residues: residues 1796–1808 (LSQN…NSVT) and 1822–1838 (ILEN…ITTG). Phosphothreonine is present on threonine 1808. Positions 1842–2266 (KRLKSSQLLE…PKQILRRKML (425 aa)) are important for nuclear localization and chromatin binding. Phosphoserine occurs at positions 1878, 1884, and 1898. The span at 1908–1919 (STNLDASENTGN) shows a compositional bias: polar residues. Composition is skewed to basic and acidic residues over residues 1920–1930 (KQDDKSSDKQL) and 1940–1952 (GREV…REDS). Serine 1944 and serine 1946 each carry phosphoserine. A DNA-binding region (a.T hook) is located at residues 1971–1983 (PRKRGRPRKINPS). The span at 1986–2004 (VGSKAVKEERSPKKKEAPS) shows a compositional bias: basic and acidic residues. A phosphoserine mark is found at serine 1996, serine 2043, serine 2044, and serine 2060. The segment covering 2064–2084 (VSEERTDEMTHKETNEQEERL) has biased composition (basic and acidic residues). Serine 2089, serine 2120, serine 2123, and serine 2154 each carry phosphoserine. The span at 2169 to 2179 (NKLEDELKDDA) shows a compositional bias: basic and acidic residues. Residues 2188–2197 (PKAKRIRTSK) are compositionally biased toward basic residues. Phosphoserine occurs at positions 2212, 2222, and 2226.

The protein belongs to the ELYS family. As to quaternary structure, associates with the Nup107-160 subcomplex of the NPC.

The protein localises to the cytoplasm. Its subcellular location is the nucleus. It localises to the nucleus envelope. It is found in the nucleus matrix. The protein resides in the chromosome. The protein localises to the centromere. Its subcellular location is the kinetochore. It localises to the nucleoplasm. It is found in the nuclear pore complex. Its function is as follows. Required for the assembly of a functional nuclear pore complex (NPC) on the surface of chromosomes as nuclei form at the end of mitosis. May initiate NPC assembly by binding to chromatin and recruiting the Nup107-160 subcomplex of the NPC. Also required for the localization of the Nup107-160 subcomplex of the NPC to the kinetochore during mitosis and for the completion of cytokinesis. The chain is Protein ELYS (AHCTF1) from Homo sapiens (Human).